Reading from the N-terminus, the 952-residue chain is Chaperone protein ClpC2, chloroplastic (952 aa).

Residues 1 to 45 (MAWSIALLTPPFFGPGRHVQAKEYREPRGCVMKMSSLKAPVLRIQ) constitute a chloroplast transit peptide. Positions 115–257 (FERFTEKAIK…RTQVIRMVGE (143 aa)) constitute a Clp R domain. Repeat stretches follow at residues 118-183 (FTEK…IGRG) and 193-257 (FTPR…MVGE). Residues 278-525 (LEEYGTNLTK…RVRLRHAQLP (248 aa)) are i. 323 to 330 (GEPGVGKT) provides a ligand contact to ATP. Positions 532–567 (EKQLRQITKEKNEAVRSQDFEMAGSHRDREIELKAE) constitute a UVR domain. An II region spans residues 592 to 783 (VTESDIQHIV…LLIMTSNVGS (192 aa)). ATP is bound at residue 666–673 (GPTGVGKS).

This sequence belongs to the ClpA/ClpB family. ClpC subfamily. Homodimer and homohexamer. Hexamerization upon addition of ATP. Interacts with CLPT1. Interacts with CLPS1. Stably associated with the import machinery. Interacts with CLPF. It depends on Mg(2+) as a cofactor. In terms of tissue distribution, expressed at low levels in roots and inflorescences. Expressed at very low levels in rosette leaves. Expressed in photosynthetic green tissues with high levels in young, developing leaf tissues.

The protein resides in the plastid. The protein localises to the chloroplast stroma. It is found in the chloroplast membrane. The catalysed reaction is ATP + H2O = ADP + phosphate + H(+). Functionally, molecular chaperone. May act as a suppressor of FtsH-mediated thylakoid membrane biogenesis and may enhance photoinhibition. Seems not involved in chloroplastic protein import. Probable component of the TIC-associated stromal import motor involved in inner membrane translocation. Has an ATPase activity, but no ADPase activity. Interacts with transit peptides with a positional preference. Localization of the signal sequence at the N-terminal end of a protein seems mandatory for interaction to take place. The sequence is that of Chaperone protein ClpC2, chloroplastic from Arabidopsis thaliana (Mouse-ear cress).